Here is a 67-residue protein sequence, read N- to C-terminus: uncharacterized protein (67 aa).

Residues 4 to 24 (WIFAILMLGVAIVLSIIATFF) traverse the membrane as a helical segment.

Its subcellular location is the membrane. This is an uncharacterized protein from Bacillus anthracis.